We begin with the raw amino-acid sequence, 647 residues long: Zinc transporter ZIP4 (647 aa).

The first 22 residues, Met-1 to Ala-22, serve as a signal peptide directing secretion. The Extracellular portion of the chain corresponds to Ser-23–Tyr-327. 3 cysteine pairs are disulfide-bonded: Cys-57–Cys-62, Cys-65–Cys-111, and Cys-160–Cys-195. Residues Glu-236 to Pro-255 form a disordered region. N-linked (GlcNAc...) asparagine glycosylation occurs at Asn-261. Residues Cys-270 and Cys-309 are joined by a disulfide bond. The chain crosses the membrane as a helical span at residues Leu-328–Leu-348. Residues Thr-349–Tyr-359 lie on the Cytoplasmic side of the membrane. A helical membrane pass occupies residues Ile-360–Leu-380. Residues Thr-381–Arg-402 lie on the Extracellular side of the membrane. The chain crosses the membrane as a helical span at residues Leu-403–Leu-423. Residues Leu-424–Tyr-498 lie on the Cytoplasmic side of the membrane. The Essential for SLC39A4 endocytosis signature appears at Leu-452–Leu-454. The segment at Glu-458–Pro-484 is disordered. Over residues Arg-460–Arg-470 the composition is skewed to basic and acidic residues. The helical transmembrane segment at Met-499 to Ala-518 threads the bilayer. Residues His-507, Asn-508, and Asp-511 each coordinate Zn(2+). The Extracellular portion of the chain corresponds to Phe-519–Gly-526. The helical transmembrane segment at Leu-527 to Leu-553 threads the bilayer. Positions 536, 537, and 540 each coordinate Zn(2+). The Cytoplasmic segment spans residues Ser-554–Ala-558. Residues Leu-559 to Val-579 form a helical membrane-spanning segment. The Extracellular segment spans residues Gly-580–Glu-586. A helical membrane pass occupies residues Ala-587–Pro-607. Over Ala-608–Pro-617 the chain is Cytoplasmic. The chain crosses the membrane as a helical span at residues Trp-618–Leu-638. At Ser-639 to Phe-647 the chain is on the extracellular side.

Belongs to the ZIP transporter (TC 2.A.5) family. As to quaternary structure, homodimer; homodimerization is mediated by the transmembrane domain. The extracellular N-terminal ectodomain is cleaved when cells are Zn(2+) deficient, N-terminally cleaved SLC39A4 is internalized at a faster rate. Post-translationally, under excess Zn(2+) conditions, SLC39A4 on the cell surface is rapidly endocytosed, ubiquitinated and degraded. In terms of processing, glycosylated. As to expression, highly expressed in kidney, small intestine, stomach, colon, jejunum and duodenum.

The protein resides in the cell membrane. Its subcellular location is the recycling endosome membrane. It localises to the apical cell membrane. It catalyses the reaction Zn(2+)(in) = Zn(2+)(out). With respect to regulation, the Zn(2+) uniporter activity is regulated by zinc availability. Extracellular acidification stimulated SLC39A4-dependent Zn(2+) uptake. Its function is as follows. Selective transporter that mediates the uptake of Zn(2+). Plays an essential role for dietary zinc uptake from small intestine. The Zn(2+) uniporter activity is regulated by zinc availability. Also exhibits polyspecific binding and transport of Cu(2+), Cd(2+) and possibly Ni(2+) but at higher concentrations. The protein is Zinc transporter ZIP4 of Homo sapiens (Human).